Here is a 162-residue protein sequence, read N- to C-terminus: Large ribosomal subunit protein uL10 (162 aa).

Belongs to the universal ribosomal protein uL10 family. Part of the ribosomal stalk of the 50S ribosomal subunit. The N-terminus interacts with L11 and the large rRNA to form the base of the stalk. The C-terminus forms an elongated spine to which L12 dimers bind in a sequential fashion forming a multimeric L10(L12)X complex.

Forms part of the ribosomal stalk, playing a central role in the interaction of the ribosome with GTP-bound translation factors. This chain is Large ribosomal subunit protein uL10, found in Phytoplasma mali (strain AT).